The following is a 373-amino-acid chain: Glutamate 5-kinase (373 aa).

Lys-15 lines the ATP pocket. Residues Ser-55, Asp-142, and Asn-154 each contribute to the substrate site. ATP contacts are provided by residues 174-175 (TD) and 216-222 (TGGMVTK). The PUA domain maps to 281–359 (SGRVIVDDGA…GEIEAILGYK (79 aa)).

It belongs to the glutamate 5-kinase family.

Its subcellular location is the cytoplasm. The enzyme catalyses L-glutamate + ATP = L-glutamyl 5-phosphate + ADP. It participates in amino-acid biosynthesis; L-proline biosynthesis; L-glutamate 5-semialdehyde from L-glutamate: step 1/2. Catalyzes the transfer of a phosphate group to glutamate to form L-glutamate 5-phosphate. The protein is Glutamate 5-kinase of Geobacter metallireducens (strain ATCC 53774 / DSM 7210 / GS-15).